Consider the following 224-residue polypeptide: Uracil phosphoribosyltransferase (224 aa).

R92 is a binding site for 5-phospho-alpha-D-ribose 1-diphosphate. K109 is a binding site for GTP. 5-phospho-alpha-D-ribose 1-diphosphate-binding positions include R117 and 145–153 (DPMLATGGT). Uracil is bound by residues I210 and 215-217 (GDA). A 5-phospho-alpha-D-ribose 1-diphosphate-binding site is contributed by D216.

This sequence belongs to the UPRTase family. Mg(2+) serves as cofactor.

It catalyses the reaction UMP + diphosphate = 5-phospho-alpha-D-ribose 1-diphosphate + uracil. The protein operates within pyrimidine metabolism; UMP biosynthesis via salvage pathway; UMP from uracil: step 1/1. Allosterically activated by GTP. Functionally, catalyzes the conversion of uracil and 5-phospho-alpha-D-ribose 1-diphosphate (PRPP) to UMP and diphosphate. This is Uracil phosphoribosyltransferase (UPP) from Nicotiana tabacum (Common tobacco).